Reading from the N-terminus, the 132-residue chain is Transcriptional regulator MraZ (132 aa).

SpoVT-AbrB domains follow at residues 5 to 47 and 76 to 119; these read TYEH…SKDD and TVEI…SKNK.

This sequence belongs to the MraZ family. Forms oligomers.

Its subcellular location is the cytoplasm. The protein resides in the nucleoid. The protein is Transcriptional regulator MraZ of Mycoplasma capricolum subsp. capricolum (strain California kid / ATCC 27343 / NCTC 10154).